Here is a 111-residue protein sequence, read N- to C-terminus: Ig heavy chain V-III region HPC76 (111 aa).

Residues 1–110 (ESGGGLVQPG…WGQGTTLTVS (110 aa)) form the Ig-like domain.

This is Ig heavy chain V-III region HPC76 from Mus musculus (Mouse).